The chain runs to 455 residues: MARIPRHRRLVLPLLCLLFQGATSLLFAIFVRYNHETDAALWHWGNHSNVDNEFYFRYPSFQDVHVMVFVGFGFLMVFLQRYGFSSVGFTFLVATFTLQWATLLQGFLHSFHGGHIHIGVESLINADFCAGAVLISFGAVLGKTGPAQLLLMALLEAVLFSVNEFILLSLLGVRDAGGSMTIHTFGAYFGLFLSRVLYRSQLEKSRHRQTSVYNSDLFAMIGTIFLWVFWPSFNSAPTALGDGQHRTVVNTYYSLTASTLSTFALSALVSGDGRLDMVHIQNAALAGGVVVGTASEMMLTPFGALAAGFLAGTVSTLGYKFFTPILESRFKLQDTCGVHNLHGMPGLLGAILGVLVAALATHEAYGDGLQTVFPLIAKGQRSATSQAMYQLFGMFVTLVFASVGGSLGGLLLKLPFLDSPPDSQCFEDQVYWEVPGEQEAETQRPLRTEEPDTQA.

Topologically, residues 1–10 are cytoplasmic; sequence MARIPRHRRL. Residues 11-31 form a helical membrane-spanning segment; sequence VLPLLCLLFQGATSLLFAIFV. At 32–58 the chain is on the extracellular side; that stretch reads RYNHETDAALWHWGNHSNVDNEFYFRY. N-linked (GlcNAc...) asparagine glycosylation occurs at asparagine 46. A helical transmembrane segment spans residues 59-79; it reads PSFQDVHVMVFVGFGFLMVFL. Over 80 to 83 the chain is Cytoplasmic; sequence QRYG. The chain crosses the membrane as a helical span at residues 84–104; sequence FSSVGFTFLVATFTLQWATLL. Over 105–121 the chain is Extracellular; sequence QGFLHSFHGGHIHIGVE. Residues 122–142 form a helical membrane-spanning segment; the sequence is SLINADFCAGAVLISFGAVLG. Residues 143 to 148 lie on the Cytoplasmic side of the membrane; sequence KTGPAQ. A helical transmembrane segment spans residues 149–169; the sequence is LLLMALLEAVLFSVNEFILLS. At 170 to 176 the chain is on the extracellular side; sequence LLGVRDA. Residues 177 to 197 form a helical membrane-spanning segment; that stretch reads GGSMTIHTFGAYFGLFLSRVL. Topologically, residues 198 to 216 are cytoplasmic; it reads YRSQLEKSRHRQTSVYNSD. Residues 217–237 traverse the membrane as a helical segment; it reads LFAMIGTIFLWVFWPSFNSAP. At 238–247 the chain is on the extracellular side; the sequence is TALGDGQHRT. A helical membrane pass occupies residues 248–270; the sequence is VVNTYYSLTASTLSTFALSALVS. Residues 271 to 274 are Cytoplasmic-facing; sequence GDGR. Residues 275–295 form a helical membrane-spanning segment; sequence LDMVHIQNAALAGGVVVGTAS. Position 296 (glutamate 296) is a topological domain, extracellular. Residues 297 to 317 traverse the membrane as a helical segment; the sequence is MMLTPFGALAAGFLAGTVSTL. The Cytoplasmic portion of the chain corresponds to 318–340; it reads GYKFFTPILESRFKLQDTCGVHN. The chain crosses the membrane as a helical span at residues 341–361; the sequence is LHGMPGLLGAILGVLVAALAT. Residues 362–390 are Extracellular-facing; it reads HEAYGDGLQTVFPLIAKGQRSATSQAMYQ. The helical transmembrane segment at 391-411 threads the bilayer; that stretch reads LFGMFVTLVFASVGGSLGGLL. Residues 412–455 lie on the Cytoplasmic side of the membrane; that stretch reads LKLPFLDSPPDSQCFEDQVYWEVPGEQEAETQRPLRTEEPDTQA. An interaction with ANK3 region spans residues 413-421; that stretch reads KLPFLDSPP.

This sequence belongs to the ammonium transporter (TC 2.A.49) family. Rh subfamily. As to quaternary structure, interacts (via C-terminus) with ANK2 and ANK3; required for targeting to the basolateral membrane. In terms of processing, N-glycosylated. In terms of tissue distribution, expressed in kidney by connecting segments and collecting tubules (at protein level).

The protein resides in the basolateral cell membrane. It localises to the cytoplasmic vesicle membrane. It catalyses the reaction NH4(+)(in) = NH4(+)(out). The catalysed reaction is methylamine(out) = methylamine(in). The enzyme catalyses CO2(out) = CO2(in). Ammonium transporter involved in the maintenance of acid-base homeostasis. Transports ammonium and its related derivative methylammonium across the basolateral plasma membrane of epithelial cells likely contributing to renal transepithelial ammonia transport and ammonia metabolism. May transport either NH4(+) or NH3 ammonia species predominantly mediating an electrogenic NH4(+) transport. May act as a CO2 channel providing for renal acid secretion. This chain is Ammonium transporter Rh type B (Rhbg), found in Rattus norvegicus (Rat).